A 552-amino-acid polypeptide reads, in one-letter code: Arginine--tRNA ligase (552 aa).

The 'HIGH' region motif lies at 130–140 (ANPTGPLSIGH).

The protein belongs to the class-I aminoacyl-tRNA synthetase family. As to quaternary structure, monomer.

The protein resides in the cytoplasm. It catalyses the reaction tRNA(Arg) + L-arginine + ATP = L-arginyl-tRNA(Arg) + AMP + diphosphate. This Desulfotalea psychrophila (strain LSv54 / DSM 12343) protein is Arginine--tRNA ligase.